The chain runs to 488 residues: MAGNALANYVQVYVMLPLDVITVDNTFEKEDETRAQLKKLTEAGADGVMIDVWWGLVEGKEPGVYDWSAYRQVFKLVQEAGLKLQAIMSCHQCGGNVGDVVNIPIPQWVRDVGKSNPDIFYTNRSGLTNIEYLTLGVDDQPLFHGRTAIQLYADYMKSFRENMADFLDAGVVVDIEVGLGPAGEMRYPSYPQSQGWVFPGVGEFICYDKYLQADFKAAAEEAGHPEWDLLDDAGTYNDTPEKTQFFADNGTYQTDKGKFFLTWYSNKLIKHGDKILDEANKVFLGCKVQLAIKVSGIHWWYNVPNHAAELTAGYYNLDDRDGYRTIAHMLTRHRASMNFTCAEMRDSEQSSEAKSAPEELVQQVLSAGWREGLNLACENALNRYDATAYNTILRNARPQGINKNGPPEHKLHGFTYLRVSDELFQEQNYTTFKTFVRRMHANLDYNPNVDPVAPLERSKAEIPIEEILEVAQPKLEPFPFDKDTDLPV.

The substrate site is built by D51, H91, and D99. E184 functions as the Proton donor in the catalytic mechanism. Positions 293, 298, and 340 each coordinate substrate. The active-site Proton acceptor is E378. Substrate is bound by residues N379–A380 and R418.

The protein belongs to the glycosyl hydrolase 14 family.

It carries out the reaction Hydrolysis of (1-&gt;4)-alpha-D-glucosidic linkages in polysaccharides so as to remove successive maltose units from the non-reducing ends of the chains.. This is Beta-amylase (BMY1) from Zea mays (Maize).